We begin with the raw amino-acid sequence, 432 residues long: Adenylosuccinate synthetase (432 aa).

GTP contacts are provided by residues 13–19 (GDEGKGK) and 41–43 (GHT). The active-site Proton acceptor is the Asp-14. The Mg(2+) site is built by Asp-14 and Gly-41. Residues 14–17 (DEGK), 39–42 (NAGH), Thr-130, Arg-144, Gln-225, Thr-240, and Arg-304 contribute to the IMP site. His-42 acts as the Proton donor in catalysis. 300 to 306 (ATTGRKR) provides a ligand contact to substrate. Residues Arg-306, 332–334 (KLD), and 415–417 (STG) each bind GTP.

It belongs to the adenylosuccinate synthetase family. In terms of assembly, homodimer. Mg(2+) is required as a cofactor.

Its subcellular location is the cytoplasm. It catalyses the reaction IMP + L-aspartate + GTP = N(6)-(1,2-dicarboxyethyl)-AMP + GDP + phosphate + 2 H(+). It participates in purine metabolism; AMP biosynthesis via de novo pathway; AMP from IMP: step 1/2. Functionally, plays an important role in the de novo pathway of purine nucleotide biosynthesis. Catalyzes the first committed step in the biosynthesis of AMP from IMP. The protein is Adenylosuccinate synthetase of Vibrio cholerae serotype O1 (strain M66-2).